The primary structure comprises 211 residues: ATP phosphoribosyltransferase (211 aa).

It belongs to the ATP phosphoribosyltransferase family. Short subfamily. Heteromultimer composed of HisG and HisZ subunits.

The protein localises to the cytoplasm. The catalysed reaction is 1-(5-phospho-beta-D-ribosyl)-ATP + diphosphate = 5-phospho-alpha-D-ribose 1-diphosphate + ATP. It participates in amino-acid biosynthesis; L-histidine biosynthesis; L-histidine from 5-phospho-alpha-D-ribose 1-diphosphate: step 1/9. Catalyzes the condensation of ATP and 5-phosphoribose 1-diphosphate to form N'-(5'-phosphoribosyl)-ATP (PR-ATP). Has a crucial role in the pathway because the rate of histidine biosynthesis seems to be controlled primarily by regulation of HisG enzymatic activity. The polypeptide is ATP phosphoribosyltransferase (Pseudomonas entomophila (strain L48)).